Here is a 199-residue protein sequence, read N- to C-terminus: Recombination protein RecR (199 aa).

Residues 57–72 form a C4-type zinc finger; sequence CSICGNITESDPCMIC. In terms of domain architecture, Toprim spans 80–176; that stretch reads SKVVVVEQPK…KVTRLAHGLA (97 aa).

This sequence belongs to the RecR family.

Functionally, may play a role in DNA repair. It seems to be involved in an RecBC-independent recombinational process of DNA repair. It may act with RecF and RecO. In Ligilactobacillus salivarius (strain UCC118) (Lactobacillus salivarius), this protein is Recombination protein RecR.